A 744-amino-acid chain; its full sequence is Tripartite motif-containing protein 2 (744 aa).

Serine 10 bears the Phosphoserine mark. The RING-type zinc-finger motif lies at 23–64 (CSICLERYKNPKVLPCLHTFCERCLQNYIPAHSLTLSCPVCR). The B box-type zinc finger occupies 113–154 (GKPLSCPNHDGNVMEFYCQSCETAMCRECTEGEHAEHPTVPL). Zn(2+) contacts are provided by cysteine 118, histidine 121, cysteine 141, and histidine 146. A Filamin repeat occupies 320–421 (TTNAVASETV…IRGSPFKLKV (102 aa)). Threonine 371 bears the Phosphothreonine mark. Residues serine 375, serine 424, and serine 428 each carry the phosphoserine modification. Positions 432–462 (EGVKRRVKSPGSGHVKQKAVKRPASMYSTGK) are disordered. NHL repeat units lie at residues 473 to 516 (IFRV…FSND), 520 to 563 (KSRF…FSND), 564 to 605 (GKFK…FQPN), 609 to 652 (VTRF…FNQE), 656 to 699 (MLKF…FDGS), and 700 to 743 (GSFL…YRYL).

Belongs to the TRIM/RBCC family. Forms homooligomers. Interacts with TRIM3; this interaction reduces TRIM2 activity. Interacts with myosin V; myosin V may not be a substrate for ubiquitination. Interacts with NEFL. Interacts with phosphorylated BCL2L11. Interacts with SIRPA. RING-type zinc finger-dependent and UBE2D1-dependent autoubiquitination. As to expression, highly expressed in the cerebellum, hippocampus, retina and spinal cord. In the cerebellum, strongest expression in Purkinje cells and in the deep cerebellar nuclei. In retina, high expression in the ganglionic cell layer, inner nuclear layer and inthe outer plexiform layer. Particularly high expression in the hippocampus, in pyramidal cells of CA1-CA3 hippocampal areas and ingranule cells of the dentate gyrus.

The protein resides in the cytoplasm. The catalysed reaction is S-ubiquitinyl-[E2 ubiquitin-conjugating enzyme]-L-cysteine + [acceptor protein]-L-lysine = [E2 ubiquitin-conjugating enzyme]-L-cysteine + N(6)-ubiquitinyl-[acceptor protein]-L-lysine.. Its pathway is protein modification; protein ubiquitination. Functionally, UBE2D1-dependent E3 ubiquitin-protein ligase that mediates the ubiquitination of NEFL and of phosphorylated BCL2L11. Plays a neuroprotective function. May play a role in neuronal rapid ischemic tolerance. Plays a role in antiviral immunity and limits new world arenavirus infection independently of its ubiquitin ligase activity by decreasing virus internalization. This is Tripartite motif-containing protein 2 (Trim2) from Mus musculus (Mouse).